Reading from the N-terminus, the 530-residue chain is 3-oxo-5-alpha-steroid 4-dehydrogenase (530 aa).

Position 33–62 (33–62 (DVVVVGWGGAGASAAIEAREQGAEVLVIER)) interacts with FAD. A helical membrane pass occupies residues 395-415 (AWQCLFGGLWAFQSMPALALM).

This sequence belongs to the FAD-dependent oxidoreductase 2 family. The cofactor is FAD.

Its subcellular location is the membrane. It carries out the reaction a 3-oxo-5alpha-steroid + A = a 3-oxo-Delta(4)-steroid + AH2. The enzyme catalyses 5alpha-androstan-3,17-dione + A = androst-4-ene-3,17-dione + AH2. The catalysed reaction is 5alpha-androst-1-ene-3,17-dione + A = androsta-1,4-diene-3,17-dione + AH2. With respect to regulation, inhibition occurs with substrate concentrations above 25 uM. Its function is as follows. Involved in the degradation of steroids having an A:B ring fusion in a trans configuration. Catalyzes the elimination of hydrogens located at positions 4 and 5 and the introduction of double bonds into ring A. This is 3-oxo-5-alpha-steroid 4-dehydrogenase from Comamonas testosteroni (Pseudomonas testosteroni).